The following is a 509-amino-acid chain: Putative 6-phosphofructo-2-kinase/fructose-2,6-bisphosphatase YLR345W (509 aa).

Serine 6 bears the Phosphoserine mark. A 6-phosphofructo-2-kinase region spans residues 6–291; sequence SDDEELLNGL…FFLMNLRQKK (286 aa). 90-98 provides a ligand contact to ATP; that stretch reads GLPATSKTL. The active-site Proton donor/acceptor is the aspartate 173. 212-217 contacts ATP; sequence NIALAL. Arginine 237 contacts beta-D-fructose 6-phosphate. The fructose-2,6-bisphosphatase stretch occupies residues 292–466; it reads GCVYFARCGT…IAHESTLRVL (175 aa). Residue arginine 298 coordinates beta-D-fructose 2,6-bisphosphate. 415 to 418 lines the ATP pocket; that stretch reads YKES. Residues tyrosine 433 and arginine 464 each coordinate beta-D-fructose 2,6-bisphosphate. Position 460 to 464 (460 to 464) interacts with ATP; it reads ESTLR.

In the C-terminal section; belongs to the phosphoglycerate mutase family. In terms of assembly, homodimer.

It localises to the cytoplasm. It carries out the reaction beta-D-fructose 2,6-bisphosphate + H2O = beta-D-fructose 6-phosphate + phosphate. It catalyses the reaction beta-D-fructose 6-phosphate + ATP = beta-D-fructose 2,6-bisphosphate + ADP + H(+). Its function is as follows. Synthesis and degradation of fructose 2,6-bisphosphate. The polypeptide is Putative 6-phosphofructo-2-kinase/fructose-2,6-bisphosphatase YLR345W (Saccharomyces cerevisiae (strain ATCC 204508 / S288c) (Baker's yeast)).